Reading from the N-terminus, the 89-residue chain is Large ribosomal subunit protein eL34 (89 aa).

Positions 1–29 (MSAPRFRNGTFKRTLKRVPGGRKVEHYKK) are disordered. Positions 13 to 29 (RTLKRVPGGRKVEHYKK) are enriched in basic residues.

It belongs to the eukaryotic ribosomal protein eL34 family.

In Methanosphaera stadtmanae (strain ATCC 43021 / DSM 3091 / JCM 11832 / MCB-3), this protein is Large ribosomal subunit protein eL34.